Consider the following 99-residue polypeptide: Co-chaperonin GroES (99 aa).

This sequence belongs to the GroES chaperonin family. As to quaternary structure, heptamer of 7 subunits arranged in a ring. Interacts with the chaperonin GroEL.

The protein resides in the cytoplasm. Together with the chaperonin GroEL, plays an essential role in assisting protein folding. The GroEL-GroES system forms a nano-cage that allows encapsulation of the non-native substrate proteins and provides a physical environment optimized to promote and accelerate protein folding. GroES binds to the apical surface of the GroEL ring, thereby capping the opening of the GroEL channel. This chain is Co-chaperonin GroES, found in Corynebacterium kroppenstedtii (strain DSM 44385 / JCM 11950 / CIP 105744 / CCUG 35717).